The sequence spans 1499 residues: Streptococcal surface protein B (1499 aa).

The signal sequence occupies residues 1–37 (MQKREVFGFRKSKVAKTLCGAVLGAALIAIADQQVLA). A disordered region spans residues 50–84 (AVTTTGNPATNLPEAQGEATEAASQSQAQAGSKDG). 4 Ag I/II A repeats span residues 145–219 (KKTT…QKAN), 220–301 (EDSQ…KKAK), 302–383 (EDND…KQAN), and 384–465 (ATNE…KKDF). Disordered regions lie at residues 689–709 (YADS…SEWD), 763–907 (TAPT…TPPV), and 1409–1472 (RTTT…TGTN). Positions 694-705 (NAEKSRGARWDT) are enriched in basic and acidic residues. A compositionally biased stretch (pro residues) spans 789-799 (PTPPVKTPDQP). Over residues 800–815 (EPSKPEEPTYETEKPL) the composition is skewed to basic and acidic residues. Pro residues predominate over residues 828 to 838 (PTPPVKIPDQP). The segment covering 839-854 (EPSKPEEPTYETEKPL) has biased composition (basic and acidic residues). Pro residues-rich tracts occupy residues 867–877 (PTPPVKTPDQP) and 888–907 (DPLP…TPPV). Residues 1428–1450 (KPKDPDKPETPKEPKVPSPKVED) show a composition bias toward basic and acidic residues. An LPXTG sorting signal motif is present at residues 1466–1470 (LPKTG). T1469 is subject to Pentaglycyl murein peptidoglycan amidated threonine. Residues 1470–1499 (GTNDATYMPYLGLAALVGFLGLGLAKRKED) constitute a propeptide, removed by sortase.

Belongs to the antigen I/II family.

It is found in the secreted. Its subcellular location is the cell wall. The protein resides in the cell surface. In terms of biological role, adhesin that mediates binding of bacteria to a variety of host cells. Plays a role in the bacterial invasion of dentinal tubules. A host immunostimulatory component, it modulates the innate immunity response. Plays a protective role against some antibiotics and cationic antimicrobial peptides (histatin-5, HTN3, but not beta-defensin 4A, DEFB4A). This Streptococcus gordonii (strain Challis / ATCC 35105 / BCRC 15272 / CH1 / DL1 / V288) protein is Streptococcal surface protein B.